The sequence spans 750 residues: Photosystem I P700 chlorophyll a apoprotein A1 (750 aa).

8 helical membrane passes run 70-93 (VFSAHFGQLSIIFLWLSGMYFHGA), 156-179 (LYCTGIGALVCAALMLFAGWFHYH), 195-219 (LNHHLAGLLGLGSLSWAGHQVHVSL), 291-309 (IAHHHLAIAILFLIAGHMY), 346-369 (WHAQLSLNLAMLGSLTIIVAHHMY), 385-411 (LSLFTHHMWIGGFLIVGAAAHAAIFMV), 433-455 (AIISHLNWVCIFLGFHSFGLYIH), and 531-549 (FLVHHIHAFTIHVPVLILL). [4Fe-4S] cluster contacts are provided by Cys573 and Cys582. 2 helical membrane passes run 589-610 (HVFLGLFWMYNAISVVIFHFSW) and 664-686 (LSAYGLFFLGAHFVWAFSLMFLF). His675 serves as a coordination point for chlorophyll a'. Residues Met683 and Tyr691 each contribute to the chlorophyll a site. Trp692 is a phylloquinone binding site. The helical transmembrane segment at 724–744 (AVGVTHYLLGGIATTWAFFLA) threads the bilayer.

Belongs to the PsaA/PsaB family. As to quaternary structure, the PsaA/B heterodimer binds the P700 chlorophyll special pair and subsequent electron acceptors. PSI consists of a core antenna complex that captures photons, and an electron transfer chain that converts photonic excitation into a charge separation. The eukaryotic PSI reaction center is composed of at least 11 subunits. It depends on P700 is a chlorophyll a/chlorophyll a' dimer, A0 is one or more chlorophyll a, A1 is one or both phylloquinones and FX is a shared 4Fe-4S iron-sulfur center. as a cofactor.

It is found in the plastid. Its subcellular location is the chloroplast thylakoid membrane. It carries out the reaction reduced [plastocyanin] + hnu + oxidized [2Fe-2S]-[ferredoxin] = oxidized [plastocyanin] + reduced [2Fe-2S]-[ferredoxin]. In terms of biological role, psaA and PsaB bind P700, the primary electron donor of photosystem I (PSI), as well as the electron acceptors A0, A1 and FX. PSI is a plastocyanin-ferredoxin oxidoreductase, converting photonic excitation into a charge separation, which transfers an electron from the donor P700 chlorophyll pair to the spectroscopically characterized acceptors A0, A1, FX, FA and FB in turn. Oxidized P700 is reduced on the lumenal side of the thylakoid membrane by plastocyanin. The sequence is that of Photosystem I P700 chlorophyll a apoprotein A1 from Crucihimalaya wallichii (Rock-cress).